The chain runs to 229 residues: MHGTRSSAHWSTQPGKFDVLNLRMTFESSSAYEIPDLRPTDFVPAYLAAWNMPRHRDYAAKNGGALHFFLDDYRFETAWSSPERLLDRVKQVGAALTPDFSLWTNMPKAAQLWNVYRSRWCGAYWQSEGIEVIPTACWATPDTFDFCFDGIPMGSTVAISSMGIRSSKVDQELFRYGLRELIDRTQPQLLLAYGQLRHCDDMDLPEVREYPTYWDRRRKWVTADGRPGK.

This is Gene 1 protein (1) from Mycobacterium phage L5 (Mycobacteriophage L5).